The sequence spans 141 residues: Galactose-6-phosphate isomerase subunit LacA 1 (141 aa).

This sequence belongs to the LacAB/RpiB family. In terms of assembly, heteromultimeric protein consisting of LacA and LacB.

It carries out the reaction aldehydo-D-galactose 6-phosphate = keto-D-tagatose 6-phosphate. The protein operates within carbohydrate metabolism; D-galactose 6-phosphate degradation; D-tagatose 6-phosphate from D-galactose 6-phosphate: step 1/1. The polypeptide is Galactose-6-phosphate isomerase subunit LacA 1 (Streptococcus agalactiae serotype III (strain NEM316)).